The primary structure comprises 305 residues: Nucleotide-binding protein Mpe_A3336 (305 aa).

22–29 (GISGSGKS) is a binding site for ATP. 74 to 77 (DVRS) contributes to the GTP binding site.

This sequence belongs to the RapZ-like family.

Its function is as follows. Displays ATPase and GTPase activities. This Methylibium petroleiphilum (strain ATCC BAA-1232 / LMG 22953 / PM1) protein is Nucleotide-binding protein Mpe_A3336.